Here is a 467-residue protein sequence, read N- to C-terminus: Dihydrolipoyl dehydrogenase 3 (467 aa).

Residues Glu34–Cys43, Lys52, and Ala116 contribute to the FAD site. Cysteines 43 and 48 form a disulfide. Residues Gly182–Ile186, Glu205, Val239, and Ala272–Arg275 each bind NAD(+). Positions 314 and 322 each coordinate FAD. Catalysis depends on His446, which acts as the Proton acceptor.

This sequence belongs to the class-I pyridine nucleotide-disulfide oxidoreductase family. In terms of assembly, homodimer. FAD serves as cofactor.

The protein localises to the cytoplasm. The enzyme catalyses N(6)-[(R)-dihydrolipoyl]-L-lysyl-[protein] + NAD(+) = N(6)-[(R)-lipoyl]-L-lysyl-[protein] + NADH + H(+). LPD-3 may substitute for lipoamide dehydrogenase of the 2-oxoglutarate dehydrogenase and pyruvate multienzyme complexes when the latter is inactive or missing. This Pseudomonas aeruginosa (strain ATCC 15692 / DSM 22644 / CIP 104116 / JCM 14847 / LMG 12228 / 1C / PRS 101 / PAO1) protein is Dihydrolipoyl dehydrogenase 3 (lpd3).